Here is a 953-residue protein sequence, read N- to C-terminus: Lysosomal alpha-glucosidase (953 aa).

A signal peptide spans 1 to 27; the sequence is MNIRKPLCSNSVVGACTLISLTTAVIL. Residues 28 to 69 constitute a propeptide that is removed on maturation; the sequence is GHLMLRELMLLPQDLHESSSGLWKTYRPHHQEGYKPGPLHIQ. The P-type domain maps to 80–131; it reads TQCDVPPSSRFDCAPDKGISQEQCEARGCCYVPAGQVLKEPQIGQPWCFFPP. 3 cysteine pairs are disulfide-bonded: Cys-82–Cys-109, Cys-92–Cys-108, and Cys-103–Cys-127. Residues Asn-140, Asn-233, and Asn-390 are each glycosylated (N-linked (GlcNAc...) asparagine). Substrate is bound at residue Asp-404. Residue Asn-470 is glycosylated (N-linked (GlcNAc...) asparagine). Asp-518 (nucleophile) is an active-site residue. Glu-521 is a catalytic residue. An intrachain disulfide couples Cys-533 to Cys-558. Arg-600 and Asp-616 together coordinate substrate. Cys-647 and Cys-658 form a disulfide bridge. His-674 is a substrate binding site. N-linked (GlcNAc...) asparagine glycosylation is found at Asn-883, Asn-926, and Asn-933.

This sequence belongs to the glycosyl hydrolase 31 family.

It is found in the lysosome. The protein localises to the lysosome membrane. The catalysed reaction is Hydrolysis of terminal, non-reducing (1-&gt;4)-linked alpha-D-glucose residues with release of alpha-D-glucose.. Essential for the degradation of glycogen in lysosomes. Has highest activity on alpha-1,4-linked glycosidic linkages, but can also hydrolyze alpha-1,6-linked glucans. The chain is Lysosomal alpha-glucosidase (Gaa) from Mus musculus (Mouse).